Here is a 437-residue protein sequence, read N- to C-terminus: Protein translocase subunit SecY (437 aa).

The next 10 helical transmembrane spans lie at 19 to 39, 69 to 89, 122 to 142, 157 to 177, 189 to 209, 219 to 239, 275 to 295, 318 to 338, 378 to 398, and 400 to 420; these read LFTLGIIVIYRIGTHIPIPGV, LLQITIFALGIMPYITASIIL, VALAVLQGTGLVATARSGALF, IFTTLTMVVTMTAGTAVVMWL, GMSILMFISIAATFPSALWSI, WIEFGIVIAVGLVMVALVVFV, GIIPVIFASSLLYIPALVVQF, HITVYFFLIIFFAFFYVAISF, GSLYLGLIALVPTMALAPLGA, and QNFPFGGTSILIIVGVGLETV.

The protein belongs to the SecY/SEC61-alpha family. As to quaternary structure, component of the Sec protein translocase complex. Heterotrimer consisting of SecY, SecE and SecG subunits. The heterotrimers can form oligomers, although 1 heterotrimer is thought to be able to translocate proteins. Interacts with the ribosome. Interacts with SecDF, and other proteins may be involved. Interacts with SecA.

It localises to the cell membrane. In terms of biological role, the central subunit of the protein translocation channel SecYEG. Consists of two halves formed by TMs 1-5 and 6-10. These two domains form a lateral gate at the front which open onto the bilayer between TMs 2 and 7, and are clamped together by SecE at the back. The channel is closed by both a pore ring composed of hydrophobic SecY resides and a short helix (helix 2A) on the extracellular side of the membrane which forms a plug. The plug probably moves laterally to allow the channel to open. The ring and the pore may move independently. The protein is Protein translocase subunit SecY of Streptomyces scabiei.